The primary structure comprises 516 residues: Cysteine--tRNA ligase (516 aa).

Cys34 is a binding site for Zn(2+). The 'HIGH' region motif lies at 36-46 (PTVYNFAHLGN). Zn(2+) is bound by residues Cys225, His250, and Glu254. The 'KMSKS' region signature appears at 285-289 (KMSKS). Lys288 provides a ligand contact to ATP.

This sequence belongs to the class-I aminoacyl-tRNA synthetase family. As to quaternary structure, monomer. Zn(2+) is required as a cofactor.

The protein localises to the cytoplasm. The enzyme catalyses tRNA(Cys) + L-cysteine + ATP = L-cysteinyl-tRNA(Cys) + AMP + diphosphate. This chain is Cysteine--tRNA ligase, found in Zymomonas mobilis subsp. mobilis (strain ATCC 31821 / ZM4 / CP4).